A 295-amino-acid chain; its full sequence is Ankyrin repeat and SOCS box protein 17 (295 aa).

The ANK repeat unit spans residues 146 to 176 (SGITPLLYVAQTRQSNILKILLQYGILEREK). Positions 232 to 295 (LGRRPIISNW…RLQKYLNLES (64 aa)) constitute an SOCS box domain.

It belongs to the ankyrin SOCS box (ASB) family.

It participates in protein modification; protein ubiquitination. In terms of biological role, may be a substrate-recognition component of a SCF-like ECS (Elongin-Cullin-SOCS-box protein) E3 ubiquitin-protein ligase complex which mediates the ubiquitination and subsequent proteasomal degradation of target proteins. The polypeptide is Ankyrin repeat and SOCS box protein 17 (ASB17) (Canis lupus familiaris (Dog)).